Reading from the N-terminus, the 371-residue chain is Riboflavin biosynthesis protein RibD (371 aa).

Positions 1–122 constitute a CMP/dCMP-type deaminase domain; it reads MEEYYMNTAI…MLEEAGIEVK (122 aa). A deaminase region spans residues 1–144; sequence MEEYYMNTAI…KMFLHFMRTG (144 aa). His-49 lines the Zn(2+) pocket. Glu-51 functions as the Proton donor in the catalytic mechanism. Zn(2+) contacts are provided by Cys-74 and Cys-83. Residues 145–371 are reductase; the sequence is LPYVTLKAAA…KDGDDVYRNR (227 aa). NADP(+) is bound at residue Ala-153. Ser-167 is a substrate binding site. Position 169 (Trp-169) interacts with NADP(+). Arg-183 contributes to the substrate binding site. The NADP(+) site is built by Thr-195 and Asp-199. Residues Leu-203 and Arg-206 each contribute to the substrate site. Position 221 (Thr-221) interacts with NADP(+). Glu-290 contacts substrate. 292 to 298 is an NADP(+) binding site; sequence GASVHGS.

In the N-terminal section; belongs to the cytidine and deoxycytidylate deaminase family. It in the C-terminal section; belongs to the HTP reductase family. It depends on Zn(2+) as a cofactor.

It catalyses the reaction 2,5-diamino-6-hydroxy-4-(5-phosphoribosylamino)-pyrimidine + H2O + H(+) = 5-amino-6-(5-phospho-D-ribosylamino)uracil + NH4(+). It carries out the reaction 5-amino-6-(5-phospho-D-ribitylamino)uracil + NADP(+) = 5-amino-6-(5-phospho-D-ribosylamino)uracil + NADPH + H(+). The protein operates within cofactor biosynthesis; riboflavin biosynthesis; 5-amino-6-(D-ribitylamino)uracil from GTP: step 2/4. Its pathway is cofactor biosynthesis; riboflavin biosynthesis; 5-amino-6-(D-ribitylamino)uracil from GTP: step 3/4. In terms of biological role, converts 2,5-diamino-6-(ribosylamino)-4(3h)-pyrimidinone 5'-phosphate into 5-amino-6-(ribosylamino)-2,4(1h,3h)-pyrimidinedione 5'-phosphate. The chain is Riboflavin biosynthesis protein RibD (ribD) from Bacillus amyloliquefaciens (Bacillus velezensis).